A 359-amino-acid chain; its full sequence is Mitochondrial glutathione transporter SLC25A39 (359 aa).

Residues 1-14 are Mitochondrial intermembrane-facing; that stretch reads MADQDPAGISPLQQ. 3 Solcar repeats span residues 9-151, 159-243, and 253-347; these read ISPL…LKAF, SDLY…VKSW, and TSVG…GKSF. Residues 15–35 traverse the membrane as a helical segment; that stretch reads MVASGTGAVVTSLFMTPLDVV. Over 36–121 the chain is Mitochondrial matrix; that stretch reads KVRLQSQRPS…VKIVRHEGTR (86 aa). [2Fe-2S] cluster-binding residues include Cys-74, Cys-78, Cys-88, and Cys-94. Residues 122-142 traverse the membrane as a helical segment; that stretch reads TLWSGLPATLVMTVPATAIYF. Over 143–160 the chain is Mitochondrial intermembrane; sequence TAYDQLKAFLCGRALTSD. The chain crosses the membrane as a helical span at residues 161–181; it reads LYAPMVAGALARLGTVTVISP. Residues 182-214 lie on the Mitochondrial matrix side of the membrane; it reads LELMRTKLQAQHVSYRELGACVRTAVAQGGWRS. Residues 215-235 form a helical membrane-spanning segment; the sequence is LWLGWGPTALRDVPFSALYWF. Residues 236-258 lie on the Mitochondrial intermembrane side of the membrane; the sequence is NYELVKSWLNGFRPKDQTSVGMS. The chain crosses the membrane as a helical span at residues 259-279; sequence FVAGGISGTVAAVLTLPFDVV. Residues 280-317 are Mitochondrial matrix-facing; sequence KTQRQVALGAMEAVRVNPLHVDSTWLLLRRIRAESGTK. Residues 318 to 338 form a helical membrane-spanning segment; it reads GLFAGFLPRIIKAAPSCAIMI. The Mitochondrial intermembrane segment spans residues 339 to 359; the sequence is STYEFGKSFFQRLNQDRLLGG.

The protein belongs to the mitochondrial carrier (TC 2.A.29) family. In terms of processing, cleaved and degraded by AFG3L2; degradation by AFG3L2 is regulated by the ability of SLC25A39 to bind iron-sulfur. In absence of mitochondrial glutathione, SLC25A39 binds iron-sulfur, preventing cleavage and degradation by AFG3L2. The presence of mitochondrial glutathione prevents iron-sulfur-binding to SLC25A39, promoting cleavage and degradation by AFG3L2. As to expression, expressed in many tissues. Abundant in testis and kidney.

It localises to the mitochondrion inner membrane. The enzyme catalyses glutathione(in) = glutathione(out). The activity of SLC25A39 is regulated by levels of mitochondrial glutathione via its ability to bind [2Fe-2S] iron-sulfur cluster. Upon physiological levels of mitochondrial glutathione, glutathione prevents iron-sulfur-binding to SLC25A39 promoting cleavage and degradation by AFG3L2. Upon depletion of mitochondrial glutathione, SLC25A39 binds iron-sulfur, preventing cleavage and degradation by AFG3L2. Its function is as follows. Mitochondrial transporter required for glutathione import into mitochondria. Glutathione, which plays key roles in oxidative metabolism, is produced exclusively in the cytosol and is imported in many organelles. Mitochondrial glutathione is required for the activity and stability of proteins containing iron-sulfur clusters, as well as erythropoiesis. This chain is Mitochondrial glutathione transporter SLC25A39, found in Homo sapiens (Human).